Consider the following 421-residue polypeptide: Gamma-glutamyl phosphate reductase (421 aa).

The protein belongs to the gamma-glutamyl phosphate reductase family.

It is found in the cytoplasm. The enzyme catalyses L-glutamate 5-semialdehyde + phosphate + NADP(+) = L-glutamyl 5-phosphate + NADPH + H(+). It functions in the pathway amino-acid biosynthesis; L-proline biosynthesis; L-glutamate 5-semialdehyde from L-glutamate: step 2/2. Its function is as follows. Catalyzes the NADPH-dependent reduction of L-glutamate 5-phosphate into L-glutamate 5-semialdehyde and phosphate. The product spontaneously undergoes cyclization to form 1-pyrroline-5-carboxylate. This chain is Gamma-glutamyl phosphate reductase, found in Pseudomonas fluorescens (strain SBW25).